The sequence spans 296 residues: MQDRFLKSIAKLPEPLATAIVPLLDKDFAGHIDAQQLEVLQIASKMELNELLLALLPIAAALARPPISEFHVGAIAKGKSGDIYMGANIELPGEALFHSVHAEQSAISHAWLSGESIIEDIIVNASPCGHCRQFINELVDGSKVKIHLPAQKIEPLAHYLPYAFGPSDLNITEPLLTKQQHTLTLDSNDPMIIEALDHAGLSYAPYTKNYASVVLETKDGATYCGRYAENAAFNPSMQPMQMALSTMARHNRDFSEINRAVLIESSKGVISLVGAAMDALHSVAVVELEHIVVEPE.

2 consecutive CMP/dCMP-type deaminase domains span residues 47-167 (ELNE…FGPS) and 186-296 (DSND…VEPE). 88 to 90 (NIE) contacts substrate. His-101 serves as a coordination point for Zn(2+). Glu-103 acts as the Proton donor in catalysis. Residues Cys-128 and Cys-131 each contribute to the Zn(2+) site.

The protein belongs to the cytidine and deoxycytidylate deaminase family. As to quaternary structure, homodimer. It depends on Zn(2+) as a cofactor.

It catalyses the reaction cytidine + H2O + H(+) = uridine + NH4(+). It carries out the reaction 2'-deoxycytidine + H2O + H(+) = 2'-deoxyuridine + NH4(+). Its function is as follows. This enzyme scavenges exogenous and endogenous cytidine and 2'-deoxycytidine for UMP synthesis. The protein is Cytidine deaminase of Shewanella halifaxensis (strain HAW-EB4).